Here is a 482-residue protein sequence, read N- to C-terminus: tRNA sulfurtransferase (482 aa).

Positions 61–165 (AEVLEILTHT…NDRLNQVLAS (105 aa)) constitute a THUMP domain. ATP-binding positions include 183-184 (LI), K265, G287, and Q296. C344 and C456 are joined by a disulfide. A Rhodanese domain is found at 404–482 (VEEHAIVLDI…GFNNVKVYRP (79 aa)). The active-site Cysteine persulfide intermediate is C456.

This sequence belongs to the ThiI family.

It localises to the cytoplasm. The catalysed reaction is [ThiI sulfur-carrier protein]-S-sulfanyl-L-cysteine + a uridine in tRNA + 2 reduced [2Fe-2S]-[ferredoxin] + ATP + H(+) = [ThiI sulfur-carrier protein]-L-cysteine + a 4-thiouridine in tRNA + 2 oxidized [2Fe-2S]-[ferredoxin] + AMP + diphosphate. The enzyme catalyses [ThiS sulfur-carrier protein]-C-terminal Gly-Gly-AMP + S-sulfanyl-L-cysteinyl-[cysteine desulfurase] + AH2 = [ThiS sulfur-carrier protein]-C-terminal-Gly-aminoethanethioate + L-cysteinyl-[cysteine desulfurase] + A + AMP + 2 H(+). Its pathway is cofactor biosynthesis; thiamine diphosphate biosynthesis. Functionally, catalyzes the ATP-dependent transfer of a sulfur to tRNA to produce 4-thiouridine in position 8 of tRNAs, which functions as a near-UV photosensor. Also catalyzes the transfer of sulfur to the sulfur carrier protein ThiS, forming ThiS-thiocarboxylate. This is a step in the synthesis of thiazole, in the thiamine biosynthesis pathway. The sulfur is donated as persulfide by IscS. This chain is tRNA sulfurtransferase, found in Vibrio campbellii (strain ATCC BAA-1116).